The sequence spans 599 residues: DNA primase (599 aa).

The segment at Cys40 to Cys64 adopts a CHC2-type zinc-finger fold. Residues Asn259–Asp342 enclose the Toprim domain. Residues Glu265, Asp309, and Asp311 each contribute to the Mg(2+) site.

The protein belongs to the DnaG primase family. As to quaternary structure, monomer. Interacts with DnaB. Zn(2+) serves as cofactor. Mg(2+) is required as a cofactor.

It catalyses the reaction ssDNA + n NTP = ssDNA/pppN(pN)n-1 hybrid + (n-1) diphosphate.. Functionally, RNA polymerase that catalyzes the synthesis of short RNA molecules used as primers for DNA polymerase during DNA replication. This chain is DNA primase, found in Halalkalibacterium halodurans (strain ATCC BAA-125 / DSM 18197 / FERM 7344 / JCM 9153 / C-125) (Bacillus halodurans).